The chain runs to 239 residues: Ribonuclease 3 (239 aa).

Positions 12-137 (RARLETAIGY…LIAAIYLDGG (126 aa)) constitute an RNase III domain. Glu-50 serves as a coordination point for Mg(2+). Asp-54 is an active-site residue. Asp-123 and Glu-126 together coordinate Mg(2+). Glu-126 is an active-site residue. The region spanning 162 to 231 (DAKTELQEWA…AMRLLEREGV (70 aa)) is the DRBM domain.

The protein belongs to the ribonuclease III family. As to quaternary structure, homodimer. Mg(2+) serves as cofactor.

It is found in the cytoplasm. The catalysed reaction is Endonucleolytic cleavage to 5'-phosphomonoester.. Functionally, digests double-stranded RNA. Involved in the processing of primary rRNA transcript to yield the immediate precursors to the large and small rRNAs (23S and 16S). Processes some mRNAs, and tRNAs when they are encoded in the rRNA operon. Processes pre-crRNA and tracrRNA of type II CRISPR loci if present in the organism. The protein is Ribonuclease 3 of Sinorhizobium fredii (strain NBRC 101917 / NGR234).